A 157-amino-acid chain; its full sequence is MRIGHGYDVHKLVENRKLILGGVDIPYERGLLGHSDADVLLHAISDAILGAIGEGDIGKHFPDTDPAYKGADSIKLLMHVMALAVGKGYAIGNLDATIVAQRPKLAPHIPQMRENIARALKADADRINVKATTTEELGFAGRGEGIAAYTVVLLERK.

Residues aspartate 8 and histidine 10 each contribute to the a divalent metal cation site. Residues 8–10 and 34–35 each bind 4-CDP-2-C-methyl-D-erythritol 2-phosphate; these read DVH and HS. Histidine 42 is a binding site for a divalent metal cation. 4-CDP-2-C-methyl-D-erythritol 2-phosphate is bound by residues 56 to 58, 61 to 65, 132 to 135, phenylalanine 139, and arginine 142; these read DIG, FPDTD, and TTTE.

This sequence belongs to the IspF family. Homotrimer. A divalent metal cation is required as a cofactor.

The enzyme catalyses 4-CDP-2-C-methyl-D-erythritol 2-phosphate = 2-C-methyl-D-erythritol 2,4-cyclic diphosphate + CMP. Its pathway is isoprenoid biosynthesis; isopentenyl diphosphate biosynthesis via DXP pathway; isopentenyl diphosphate from 1-deoxy-D-xylulose 5-phosphate: step 4/6. Its function is as follows. Involved in the biosynthesis of isopentenyl diphosphate (IPP) and dimethylallyl diphosphate (DMAPP), two major building blocks of isoprenoid compounds. Catalyzes the conversion of 4-diphosphocytidyl-2-C-methyl-D-erythritol 2-phosphate (CDP-ME2P) to 2-C-methyl-D-erythritol 2,4-cyclodiphosphate (ME-CPP) with a corresponding release of cytidine 5-monophosphate (CMP). This chain is 2-C-methyl-D-erythritol 2,4-cyclodiphosphate synthase, found in Geotalea uraniireducens (strain Rf4) (Geobacter uraniireducens).